We begin with the raw amino-acid sequence, 331 residues long: UPF0194 membrane protein YbhG (331 aa).

The signal sequence occupies residues 1–19 (MKKPVVIGLAIAAIVAVIA). A coiled-coil region spans residues 107–208 (EEIAQAAAAV…LDLQDTTLIA (102 aa)).

It belongs to the UPF0194 family.

It localises to the periplasm. The chain is UPF0194 membrane protein YbhG from Salmonella agona (strain SL483).